The sequence spans 208 residues: RNA chaperone ProQ (208 aa).

Residues 106-127 are compositionally biased toward basic and acidic residues; that stretch reads SKAKVATRRKEQAKKAREEAKA. Positions 106–154 are disordered; that stretch reads SKAKVATRRKEQAKKAREEAKAKKTARAATPPKRRPQPAAKKVEQPVET.

It belongs to the ProQ family.

It localises to the cytoplasm. RNA chaperone with significant RNA binding, RNA strand exchange and RNA duplexing activities. The protein is RNA chaperone ProQ of Aliivibrio fischeri (strain ATCC 700601 / ES114) (Vibrio fischeri).